Consider the following 158-residue polypeptide: NADH-quinone oxidoreductase subunit B 1 (158 aa).

[4Fe-4S] cluster contacts are provided by Cys37, Cys38, Cys102, and Cys132.

The protein belongs to the complex I 20 kDa subunit family. In terms of assembly, NDH-1 is composed of 14 different subunits. Subunits NuoB, C, D, E, F, and G constitute the peripheral sector of the complex. The cofactor is [4Fe-4S] cluster.

It is found in the cell inner membrane. It carries out the reaction a quinone + NADH + 5 H(+)(in) = a quinol + NAD(+) + 4 H(+)(out). In terms of biological role, NDH-1 shuttles electrons from NADH, via FMN and iron-sulfur (Fe-S) centers, to quinones in the respiratory chain. Couples the redox reaction to proton translocation (for every two electrons transferred, four hydrogen ions are translocated across the cytoplasmic membrane), and thus conserves the redox energy in a proton gradient. This chain is NADH-quinone oxidoreductase subunit B 1, found in Chromobacterium violaceum (strain ATCC 12472 / DSM 30191 / JCM 1249 / CCUG 213 / NBRC 12614 / NCIMB 9131 / NCTC 9757 / MK).